We begin with the raw amino-acid sequence, 457 residues long: Dynein regulatory complex protein 10 (457 aa).

3 coiled-coil regions span residues 101–127 (EKAS…DQER), 209–258 (IQDI…LHQV), and 292–381 (QQDI…AESE). The IQ domain occupies 397 to 426 (MVRAATLIQAMWKGYLVRSMLRSRKKKRVK). The segment at 419-457 (SRKKKRVKSKGKDKGKGKEKPKEEKGKEKKAKGKGKGKK) is disordered. Residues 428–445 (KGKDKGKGKEKPKEEKGK) are compositionally biased toward basic and acidic residues. Positions 446–457 (EKKAKGKGKGKK) are enriched in basic residues.

It belongs to the DRC10 family. In terms of assembly, component of the nexin-dynein regulatory complex (N-DRC). Interacts with CFAP52.

It is found in the cytoplasm. The protein resides in the cytoskeleton. Its subcellular location is the flagellum axoneme. In terms of biological role, component of the nexin-dynein regulatory complex (N-DRC), a key regulator of ciliary/flagellar motility which maintains the alignment and integrity of the distal axoneme and regulates microtubule sliding in motile axonemes. The polypeptide is Dynein regulatory complex protein 10 (Iqcd) (Rattus norvegicus (Rat)).